The primary structure comprises 271 residues: Phosphatidylinositol transfer protein beta isoform (271 aa).

An N6-acetyllysine modification is found at Lys215. Ser262 is subject to Phosphoserine; by PKC.

The protein belongs to the PtdIns transfer protein family. PI transfer class I subfamily. In terms of processing, constitutive phosphorylation of Ser-262 has no effect on phospholipid transfer activity but is required for Golgi targeting.

Its subcellular location is the golgi apparatus. It localises to the golgi apparatus membrane. The protein resides in the endoplasmic reticulum membrane. It catalyses the reaction a 1,2-diacyl-sn-glycero-3-phosphocholine(in) = a 1,2-diacyl-sn-glycero-3-phosphocholine(out). The catalysed reaction is a 1,2-diacyl-sn-glycero-3-phospho-(1D-myo-inositol)(in) = a 1,2-diacyl-sn-glycero-3-phospho-(1D-myo-inositol)(out). The enzyme catalyses an N-(acyl)-sphingosylphosphocholine(in) = an N-(acyl)-sphingosylphosphocholine(out). Functionally, catalyzes the transfer of phosphatidylinositol, phosphatidylcholine and sphingomyelin between membranes. Required for COPI-mediated retrograde transport from the Golgi to the endoplasmic reticulum; phosphatidylinositol and phosphatidylcholine transfer activity is essential for this function. The polypeptide is Phosphatidylinositol transfer protein beta isoform (Pitpnb) (Mus musculus (Mouse)).